We begin with the raw amino-acid sequence, 360 residues long: Josephin-like protein (360 aa).

A Josephin domain is found at 5–192 (ESKIYHERQR…NQLPLASNYR (188 aa)). Cysteine 18 acts as the Nucleophile in catalysis. Histidine 129 functions as the Proton acceptor in the catalytic mechanism.

The catalysed reaction is Thiol-dependent hydrolysis of ester, thioester, amide, peptide and isopeptide bonds formed by the C-terminal Gly of ubiquitin (a 76-residue protein attached to proteins as an intracellular targeting signal).. May act as a deubiquitinating enzyme. This chain is Josephin-like protein, found in Arabidopsis thaliana (Mouse-ear cress).